A 485-amino-acid polypeptide reads, in one-letter code: Arginine/agmatine antiporter (485 aa).

12 helical membrane-spanning segments follow: residues 12 to 34 (GTIALAGMVVSSIIGGGIFSLPQ), 38 to 60 (ATAGAGAVILSWILTGFGMFFIA), 89 to 111 (IGFTIGWGYWLCQIFGNVGYAVI), 126 to 148 (GGNTLPAILGGSILIWVFNFIVL), 155 to 177 (SIINVIGTIFKIIPLIIFIILTA), 211 to 230 (TMLVTLWAFIGIEGAVVMSG), 243 to 265 (VLGFLGCLTIYILFSLLPFGSLF), 291 to 313 (VLMNVGLIIAVLSSWLSWTIIVA), 363 to 385 (WNTMLSITGVMVLPAYLASAAFL), 400 to 422 (IKAPLAMITGILGVVYSLWLIYA), 427 to 446 (YLFMALVLLALGIPFYIDAG), and 461 to 483 (IVGMTFIGLLALTAIFLFSTGRI).

This sequence belongs to the amino acid-polyamine-organocation (APC) superfamily. Basic amino acid/polyamine antiporter (APA) (TC 2.A.3.2) family.

It localises to the cell inner membrane. Functionally, catalyzes the exchange of L-arginine for agmatine. The arginine uptake by the bacterium in the macrophage may be a virulence factor against the host innate immune response. In Chlamydia pneumoniae (Chlamydophila pneumoniae), this protein is Arginine/agmatine antiporter (aaxC).